We begin with the raw amino-acid sequence, 365 residues long: Aminomethyltransferase (365 aa).

This sequence belongs to the GcvT family. In terms of assembly, the glycine cleavage system is composed of four proteins: P, T, L and H.

It catalyses the reaction N(6)-[(R)-S(8)-aminomethyldihydrolipoyl]-L-lysyl-[protein] + (6S)-5,6,7,8-tetrahydrofolate = N(6)-[(R)-dihydrolipoyl]-L-lysyl-[protein] + (6R)-5,10-methylene-5,6,7,8-tetrahydrofolate + NH4(+). Its function is as follows. The glycine cleavage system catalyzes the degradation of glycine. The sequence is that of Aminomethyltransferase from Serratia proteamaculans (strain 568).